A 346-amino-acid polypeptide reads, in one-letter code: MKVLGIETSCDDCCVAVVENGIHILSNIKLSQKEHEKYYGVVPEIASRLHTEAIMSVCIKALKKANTKISEIDLIAVTSRPGLIGSLIVGLNFAKGLAISLKKPIICIDHILGHLYAPLMHSKIEYPFISLLLSGGHTLIAKQKNFDDVEILGRTLDDSCGEAFDKVAKHYDIGFPGGPNIEQISKNGDENTFKFPVTTFRKKENWYDFSYSGLKTACIHQLEKFKNKDNPTTKNNIAASFQKAAFENLITPLKRAIKDTQIKKLVIAGGVASNLYLREKIDKLKIQTYYPPLDLCTDNGAMIAGLGFNMYLKYGESPIEIEANSRIENYKNQYKRKNNEKNFSNA.

Fe cation contacts are provided by His-110 and His-114. Substrate contacts are provided by residues 132–136, Asp-165, Gly-178, and Asn-274; that span reads LLSGG. Asp-298 lines the Fe cation pocket.

It belongs to the KAE1 / TsaD family. Requires Fe(2+) as cofactor.

It is found in the cytoplasm. The catalysed reaction is L-threonylcarbamoyladenylate + adenosine(37) in tRNA = N(6)-L-threonylcarbamoyladenosine(37) in tRNA + AMP + H(+). In terms of biological role, required for the formation of a threonylcarbamoyl group on adenosine at position 37 (t(6)A37) in tRNAs that read codons beginning with adenine. Is involved in the transfer of the threonylcarbamoyl moiety of threonylcarbamoyl-AMP (TC-AMP) to the N6 group of A37, together with TsaE and TsaB. TsaD likely plays a direct catalytic role in this reaction. In Borreliella afzelii (strain PKo) (Borrelia afzelii), this protein is tRNA N6-adenosine threonylcarbamoyltransferase.